We begin with the raw amino-acid sequence, 843 residues long: Probable cleavage and polyadenylation specificity factor subunit 2 (843 aa).

Basic and acidic residues predominate over residues 414–425 (AEETRLRMERAR). Disordered regions lie at residues 414 to 443 (AEET…DIAA) and 691 to 753 (DKNR…TKGK). Residues 432–441 (ESDDSDDDDI) show a composition bias toward acidic residues. Over residues 732–746 (SGKEVENGHTNDSRT) the composition is skewed to basic and acidic residues.

It belongs to the metallo-beta-lactamase superfamily. RNA-metabolizing metallo-beta-lactamase-like family. CPSF2/YSH1 subfamily. CPSF is a heterotetramer composed of four distinct subunits 160, 100, 70 and 30 kDa.

It is found in the nucleus. In terms of biological role, CPSF plays a key role in pre-mRNA 3'-end formation, recognizing the AAUAAA signal sequence and interacting with poly(A)polymerase and other factors to bring about cleavage and poly(A) addition. In Caenorhabditis elegans, this protein is Probable cleavage and polyadenylation specificity factor subunit 2 (cpsf-2).